Here is an 800-residue protein sequence, read N- to C-terminus: U4/U6.U5 tri-snRNP-associated protein 1 (800 aa).

A disordered region spans residues 1-120; that stretch reads MGSSKKHRGE…SSGDASSLSI (120 aa). Residues 32 to 42 are compositionally biased toward basic residues; the sequence is HREHKKHKHRS. The span at 58-101 shows a compositional bias: basic and acidic residues; it reads ERGGERGSGRRGAEAEARSSTHGRERSQAEPSERRVKREKRDDG. Residues 104–119 are compositionally biased toward low complexity; that stretch reads AAASSKTSSGDASSLS. Residues Lys125 and Lys133 each participate in a glycyl lysine isopeptide (Lys-Gly) (interchain with G-Cter in SUMO2) cross-link. Lys141 participates in a covalent cross-link: Glycyl lysine isopeptide (Lys-Gly) (interchain with G-Cter in SUMO1); alternate. Lys141 participates in a covalent cross-link: Glycyl lysine isopeptide (Lys-Gly) (interchain with G-Cter in SUMO2); alternate. Residues Lys147 and Lys188 each participate in a glycyl lysine isopeptide (Lys-Gly) (interchain with G-Cter in SUMO2) cross-link. The stretch at 157–231 forms a coiled coil; it reads NPMALRQREE…KLLEEMDQEF (75 aa). Thr189 is subject to Phosphothreonine. A Glycyl lysine isopeptide (Lys-Gly) (interchain with G-Cter in SUMO2) cross-link involves residue Lys277. Residues 311 to 330 form a disordered region; that stretch reads PDYLPYAEDESVDDLAQQKP. Ser321 is modified (phosphoserine). Residues Lys329 and Lys336 each participate in a glycyl lysine isopeptide (Lys-Gly) (interchain with G-Cter in SUMO2) cross-link. Ser348 carries the phosphoserine modification. The residue at position 392 (Thr392) is a Phosphothreonine. Glycyl lysine isopeptide (Lys-Gly) (interchain with G-Cter in SUMO2) cross-links involve residues Lys400 and Lys414. The segment at 419–497 is disordered; sequence RADDLLPLGD…QVLEEDEAEL (79 aa). Thr430 is subject to Phosphothreonine. Residues Ser448, Ser474, Ser486, and Ser521 each carry the phosphoserine modification. Positions 490 to 533 form a coiled coil; sequence LEEDEAELELQKQLEKGRRLRQLQQLQQLRDSGEKVVEIVKKLE. Lys548 is covalently cross-linked (Glycyl lysine isopeptide (Lys-Gly) (interchain with G-Cter in SUMO2)). The segment at 571-604 is disordered; it reads LAGNREEQEELMDFERDEERSANGGSESDGEENI. Phosphoserine occurs at positions 591, 596, 598, and 621. Glycyl lysine isopeptide (Lys-Gly) (interchain with G-Cter in SUMO2) cross-links involve residues Lys648, Lys657, and Lys684. Thr695 is modified (phosphothreonine). Glycyl lysine isopeptide (Lys-Gly) (interchain with G-Cter in SUMO2) cross-links involve residues Lys699, Lys709, Lys723, Lys749, and Lys758. The residue at position 761 (Ser761) is a Phosphoserine. At Thr764 the chain carries Phosphothreonine. Glycyl lysine isopeptide (Lys-Gly) (interchain with G-Cter in SUMO2) cross-links involve residues Lys775 and Lys780. Ser789 is subject to Phosphoserine. Lys791 participates in a covalent cross-link: Glycyl lysine isopeptide (Lys-Gly) (interchain with G-Cter in SUMO2).

Belongs to the SNU66/SART1 family. As to quaternary structure, identified in the spliceosome C complex. Component of the U4/U6-U5 tri-snRNP complex composed of the U4, U6 and U5 snRNAs and at least PRPF3, PRPF4, PRPF6, PRPF8, PRPF31, SNRNP200, TXNL4A, SNRNP40, DDX23, CD2BP2, PPIH, SNU13, EFTUD2, SART1 and USP39. Interacts with UBL5. Interacts with IVNS1ABP (via Kelch repeats). In terms of processing, sumoylated with SUMO2. As to expression, ubiquitously expressed.

The protein resides in the nucleus. In terms of biological role, plays a role in mRNA splicing as a component of the U4/U6-U5 tri-snRNP, one of the building blocks of the spliceosome. May also bind to DNA. The protein is U4/U6.U5 tri-snRNP-associated protein 1 (SART1) of Homo sapiens (Human).